We begin with the raw amino-acid sequence, 146 residues long: Histone H2A.1 (146 aa).

The residue at position 1 (methionine 1) is an N-acetylmethionine. Positions 1–24 are disordered; it reads MDATKTTKGAGGRKGGPRKKSVTK. The short motif at 142–145 is the SPKK motif element; it reads SPKK.

Belongs to the histone H2A family. The nucleosome is a histone octamer containing two molecules each of H2A, H2B, H3 and H4 assembled in one H3-H4 heterotetramer and two H2A-H2B heterodimers. The octamer wraps approximately 147 bp of DNA. As to expression, high expression in meristematic tissues, in cells of the root pericycle and in shoot cortical cells undergoing endoduplication of their DNA.

It is found in the nucleus. The protein localises to the chromosome. Core component of nucleosome. Nucleosomes wrap and compact DNA into chromatin, limiting DNA accessibility to the cellular machineries which require DNA as a template. Histones thereby play a central role in transcription regulation, DNA repair, DNA replication and chromosomal stability. DNA accessibility is regulated via a complex set of post-translational modifications of histones, also called histone code, and nucleosome remodeling. This is Histone H2A.1 from Solanum lycopersicum (Tomato).